Consider the following 262-residue polypeptide: MPTAYIITVGNELLIGRVVNTNAAWLASKLTYLGYSVRRIVVVPDVEEDIVEAFREAMAKADVVISTGGLGPTPDDITNLAFCKALGAEPVVNEEALKMVREKYASRGYPMTEERVKMAMMPPGAVPLPNPVGTAPGILYETGGKIVVLLPGVPREMEAIFEGYVEPLLKSRGPPAHFSERVVTVRGVPEADVAPIIREVMRQNPRVYVKSHPKGLEVDAPLLQIHIYASAPTPQEAEGAVDAALKKLVELIKSKFSNAAIY.

This sequence belongs to the CinA family.

The protein is Protein Pcal_0062 of Pyrobaculum calidifontis (strain DSM 21063 / JCM 11548 / VA1).